The chain runs to 497 residues: Angiopoietin-1 (497 aa).

Residues 1-19 (MTVFLSFAFFAAILTHIGC) form the signal peptide. A coiled-coil region spans residues 81-119 (QKLQHLEHVMENYTQWLQKLENYIVENMKSEMAQIQQNA). Residues N92, N122, N154, N243, and N294 are each glycosylated (N-linked (GlcNAc...) asparagine). Residues 153-261 (LNQTSRLEIQ…LELMDTVHNL (109 aa)) adopt a coiled-coil conformation. In terms of domain architecture, Fibrinogen C-terminal spans 276 to 496 (REEEKPFRDC…STTMMIRPLD (221 aa)). Intrachain disulfides connect C285–C314 and C438–C451.

In terms of assembly, homooligomer. Interacts with TEK/TIE2. Interacts with SVEP1/polydom. Interacts with THBD; this interaction significantly inhibits the generation of activated PC and TAFIa/CPB2 by the thrombin/thrombomodulin complex.

The protein resides in the secreted. Functionally, binds and activates TIE2 receptor by inducing its tyrosine phosphorylation. Implicated in endothelial developmental processes later and distinct from that of VEGF. Appears to play a crucial role in mediating reciprocal interactions between the endothelium and surrounding matrix and mesenchyme. Mediates blood vessel maturation/stability. It may play an important role in the heart early development. This chain is Angiopoietin-1 (Angpt1), found in Rattus norvegicus (Rat).